Reading from the N-terminus, the 92-residue chain is UPF0223 protein EF_2462 (92 aa).

Belongs to the UPF0223 family.

This Enterococcus faecalis (strain ATCC 700802 / V583) protein is UPF0223 protein EF_2462.